A 246-amino-acid chain; its full sequence is Probable transcriptional regulatory protein HD_0596 (246 aa).

Belongs to the TACO1 family.

The protein resides in the cytoplasm. The sequence is that of Probable transcriptional regulatory protein HD_0596 from Haemophilus ducreyi (strain 35000HP / ATCC 700724).